A 389-amino-acid polypeptide reads, in one-letter code: Capsule polysaccharide export protein KpsS (389 aa).

The protein is Capsule polysaccharide export protein KpsS (kpsS) of Escherichia coli.